Consider the following 279-residue polypeptide: Large ribosomal subunit protein mL46 (279 aa).

The residue at position 230 (Lys230) is an N6-acetyllysine.

It belongs to the mitochondrion-specific ribosomal protein mL46 family. In terms of assembly, component of the mitochondrial ribosome large subunit (39S) which comprises a 16S rRNA and about 50 distinct proteins.

It is found in the mitochondrion. This Pongo abelii (Sumatran orangutan) protein is Large ribosomal subunit protein mL46 (MRPL46).